Here is a 326-residue protein sequence, read N- to C-terminus: tRNA U34 carboxymethyltransferase (326 aa).

Residues Lys91, Trp105, Lys110, Gly130, Met196, Tyr200, and Arg315 each coordinate carboxy-S-adenosyl-L-methionine.

The protein belongs to the class I-like SAM-binding methyltransferase superfamily. CmoB family. In terms of assembly, homotetramer.

The enzyme catalyses carboxy-S-adenosyl-L-methionine + 5-hydroxyuridine(34) in tRNA = 5-carboxymethoxyuridine(34) in tRNA + S-adenosyl-L-homocysteine + H(+). In terms of biological role, catalyzes carboxymethyl transfer from carboxy-S-adenosyl-L-methionine (Cx-SAM) to 5-hydroxyuridine (ho5U) to form 5-carboxymethoxyuridine (cmo5U) at position 34 in tRNAs. This is tRNA U34 carboxymethyltransferase from Tolumonas auensis (strain DSM 9187 / NBRC 110442 / TA 4).